Reading from the N-terminus, the 136-residue chain is S-protein homolog 25 (136 aa).

The N-terminal stretch at 1 to 20 (MNHSVFVILITITYFGLNQA) is a signal peptide. N-linked (GlcNAc...) asparagine glycosylation is found at asparagine 71 and asparagine 84.

It belongs to the plant self-incompatibility (S1) protein family.

Its subcellular location is the secreted. This Arabidopsis thaliana (Mouse-ear cress) protein is S-protein homolog 25.